The sequence spans 263 residues: Phosphatidylglycerol--prolipoprotein diacylglyceryl transferase (263 aa).

A run of 4 helical transmembrane segments spans residues 10–30, 56–76, 91–111, and 117–137; these read VAITLGPLQFRWYGLMYLFGF, MVTYVILGVVLGGRIGYILFY, IWNGGMSFHGGLLGVVFAMWL, and GLGFMDVSDFVAPLIPPGLFF. Residue R139 participates in a 1,2-diacyl-sn-glycero-3-phospho-(1'-sn-glycerol) binding. Transmembrane regions (helical) follow at residues 171–191, 199–219, and 231–251; these read PSQLYECALEGVILFLALWVF, GHVSGLFALLYGVFRFTVEFV, and FGWLTMGQVLCLPLIMLGLWL.

This sequence belongs to the Lgt family.

Its subcellular location is the cell inner membrane. The enzyme catalyses L-cysteinyl-[prolipoprotein] + a 1,2-diacyl-sn-glycero-3-phospho-(1'-sn-glycerol) = an S-1,2-diacyl-sn-glyceryl-L-cysteinyl-[prolipoprotein] + sn-glycerol 1-phosphate + H(+). The protein operates within protein modification; lipoprotein biosynthesis (diacylglyceryl transfer). In terms of biological role, catalyzes the transfer of the diacylglyceryl group from phosphatidylglycerol to the sulfhydryl group of the N-terminal cysteine of a prolipoprotein, the first step in the formation of mature lipoproteins. This chain is Phosphatidylglycerol--prolipoprotein diacylglyceryl transferase, found in Nitratidesulfovibrio vulgaris (strain ATCC 29579 / DSM 644 / CCUG 34227 / NCIMB 8303 / VKM B-1760 / Hildenborough) (Desulfovibrio vulgaris).